A 633-amino-acid chain; its full sequence is Leucine-rich repeat and IQ domain-containing protein 3 (633 aa).

LRR repeat units lie at residues Ser-51 to Lys-72, Lys-73 to Ser-94, and Asn-98 to Ser-119. An LRRCT domain is found at Cys-132–Pro-179. The region spanning His-215 to His-244 is the IQ domain. Residues Ser-324 to Glu-343 form a disordered region. The span at Lys-325–Lys-336 shows a compositional bias: basic residues. Residues Ile-556–Tyr-617 adopt a coiled-coil conformation.

The protein is Leucine-rich repeat and IQ domain-containing protein 3 (Lrriq3) of Mus musculus (Mouse).